Here is a 325-residue protein sequence, read N- to C-terminus: Tetraacyldisaccharide 4'-kinase (325 aa).

Position 58-65 (58-65 (TVGGSGKT)) interacts with ATP.

The protein belongs to the LpxK family.

The catalysed reaction is a lipid A disaccharide + ATP = a lipid IVA + ADP + H(+). It functions in the pathway glycolipid biosynthesis; lipid IV(A) biosynthesis; lipid IV(A) from (3R)-3-hydroxytetradecanoyl-[acyl-carrier-protein] and UDP-N-acetyl-alpha-D-glucosamine: step 6/6. Its function is as follows. Transfers the gamma-phosphate of ATP to the 4'-position of a tetraacyldisaccharide 1-phosphate intermediate (termed DS-1-P) to form tetraacyldisaccharide 1,4'-bis-phosphate (lipid IVA). The chain is Tetraacyldisaccharide 4'-kinase from Coxiella burnetii (strain RSA 331 / Henzerling II).